The sequence spans 189 residues: Blue copper protein (189 aa).

Residues 1–24 (MAFSNALVLCFLLAIINMALPSLA) form the signal peptide. The Phytocyanin domain maps to 25–124 (TVYTVGDTSG…GMKLSIKVKA (100 aa)). The Cu cation site is built by histidine 65, cysteine 106, and histidine 111. Cysteine 78 and cysteine 106 are disulfide-bonded. The span at 127–160 (GSSAAPSATPSSSGKGSPSSDDTPAATTTTTTPT) shows a compositional bias: low complexity. The segment at 127–165 (GSSAAPSATPSSSGKGSPSSDDTPAATTTTTTPTKQNES) is disordered. N-linked (GlcNAc...) asparagine glycosylation is present at asparagine 163.

This is Blue copper protein from Pisum sativum (Garden pea).